Consider the following 146-residue polypeptide: Leghemoglobin 2 (146 aa).

Positions 2 to 146 (GFTAQQDALV…LAAAIKKAMS (145 aa)) constitute a Globin domain. At Tyr-30 the chain carries Nitrated tyrosine. Ser-45 contacts heme b. Position 45 is a phosphoserine (Ser-45). His-61 contributes to the O2 binding site. Residues Lys-64, His-93, and Lys-96 each contribute to the heme b site. Residue Tyr-134 is modified to Nitrated tyrosine.

Belongs to the plant globin family. As to quaternary structure, monomer. Post-translationally, nitrated in effective nodules and particularly in hypoxic conditions; this mechanism may play a protective role in the symbiosis by buffering toxic peroxynitrite NO(2)(-). Nitration level decrease during nodule senescence. Phosphorylation at Ser-45 disrupts the molecular environment of its porphyrin ring oxygen binding pocket, thus leading to a reduced oxygen consumption and to the delivery of oxygen O(2) to symbiosomes. As to expression, specifically and strongly expressed in root nodules and at low levels in seedlings.

It localises to the cytoplasm. The protein resides in the cytosol. The protein localises to the nucleus. Leghemoglobin that reversibly binds oxygen O(2) through a pentacoordinated heme iron. In root nodules, facilitates the diffusion of oxygen to the bacteroids while preventing the bacterial nitrogenase from being inactivated by buffering dioxygen, nitric oxide and carbon monoxide, and promoting the formation of reactive oxygen species (ROS, e.g. H(2)O(2)). This role is essential for symbiotic nitrogen fixation (SNF). This is Leghemoglobin 2 from Lotus japonicus (Lotus corniculatus var. japonicus).